The chain runs to 136 residues: Urease subunit beta (136 aa).

A disordered region spans residues 112–136 (ENDEYAGVFGDNGTENVNKKGGKRS).

It belongs to the urease beta subunit family. Heterotrimer of UreA (gamma), UreB (beta) and UreC (alpha) subunits. Three heterotrimers associate to form the active enzyme.

Its subcellular location is the cytoplasm. It catalyses the reaction urea + 2 H2O + H(+) = hydrogencarbonate + 2 NH4(+). It functions in the pathway nitrogen metabolism; urea degradation; CO(2) and NH(3) from urea (urease route): step 1/1. The polypeptide is Urease subunit beta (Staphylococcus aureus (strain MRSA252)).